Reading from the N-terminus, the 536-residue chain is Probable protein S-acyltransferase 23 (536 aa).

The segment at 1 to 23 (MDSSEIEVVPLDSNSHQSPTESP) is disordered. Polar residues predominate over residues 12–23 (DSNSHQSPTESP). ANK repeat units follow at residues 57 to 86 (NGFY…DVNS), 90 to 119 (IQQT…RIEA), 123 to 153 (NGFR…DYNA), 157 to 186 (EGRS…CQNR), 190 to 219 (TGCT…KEEL), and 225 to 254 (TGST…TRKN). The next 2 helical transmembrane spans lie at 270 to 290 (YAPM…TSIV) and 298 to 318 (ITAM…YALI). One can recognise a DHHC domain in the interval 363–413 (QLCPTCKIIRPVRSKHCPTCKRCVEQFDHHCPWISNCVGKKNKRYFLVFVI). Catalysis depends on cysteine 393, which acts as the S-palmitoyl cysteine intermediate. 2 consecutive transmembrane segments (helical) span residues 407-427 (YFLV…TTAV) and 454-474 (AAVF…LTIS).

This sequence belongs to the DHHC palmitoyltransferase family. In terms of tissue distribution, expressed in roots, shoots, flowers and pollen.

It localises to the golgi apparatus membrane. The catalysed reaction is L-cysteinyl-[protein] + hexadecanoyl-CoA = S-hexadecanoyl-L-cysteinyl-[protein] + CoA. In terms of biological role, palmitoyl acyltransferase. In Arabidopsis thaliana (Mouse-ear cress), this protein is Probable protein S-acyltransferase 23 (PAT23).